We begin with the raw amino-acid sequence, 74 residues long: Large ribosomal subunit protein bL31 (74 aa).

4 residues coordinate Zn(2+): Cys16, Cys18, Cys38, and Cys41.

Belongs to the bacterial ribosomal protein bL31 family. Type A subfamily. Part of the 50S ribosomal subunit. Requires Zn(2+) as cofactor.

Binds the 23S rRNA. The protein is Large ribosomal subunit protein bL31 of Mycobacteroides abscessus (strain ATCC 19977 / DSM 44196 / CCUG 20993 / CIP 104536 / JCM 13569 / NCTC 13031 / TMC 1543 / L948) (Mycobacterium abscessus).